The chain runs to 337 residues: Mannan polymerase complex subunit mnn9 (337 aa).

The Cytoplasmic portion of the chain corresponds to 1–8 (MRVYNKSR). A helical; Signal-anchor for type II membrane protein transmembrane segment spans residues 9 to 29 (IVGQLLFVALGITFIYYLFTP). Topologically, residues 30-337 (SVNSNAKVQI…PYYLVFHHNE (308 aa)) are lumenal.

It belongs to the ANP1/MMN9/VAN1 family.

It localises to the endoplasmic reticulum membrane. Its subcellular location is the golgi apparatus membrane. It functions in the pathway protein modification; protein glycosylation. Functionally, required for the addition of the long alpha 1,6-mannose backbone of N-linked glycans on cell wall and periplasmic proteins. The protein is Mannan polymerase complex subunit mnn9 of Schizosaccharomyces pombe (strain 972 / ATCC 24843) (Fission yeast).